Consider the following 1361-residue polypeptide: uncharacterized protein (1361 aa).

This sequence belongs to the IIV-6 261R/396L/443R family.

This is an uncharacterized protein from Invertebrate iridescent virus 6 (IIV-6).